The following is a 317-amino-acid chain: 2-oxoglutarate and iron-dependent oxygenase domain-containing protein 3 (317 aa).

The tract at residues 1–34 (MATRHRRRGGSAPSWAKPGKPGERPGGPKKSRGR) is disordered. Residues 1–39 (MATRHRRRGGSAPSWAKPGKPGERPGGPKKSRGRTSWKS) are Cytoplasmic-facing. A helical; Signal-anchor for type II membrane protein transmembrane segment spans residues 40–60 (LLIWGVFGVTLGLMAGYYLWG). The Lumenal segment spans residues 61–317 (ELITDDSVTE…EHAIGDPTWT (257 aa)). 2 N-linked (GlcNAc...) asparagine glycosylation sites follow: asparagine 195 and asparagine 213. Positions 205 to 307 (KPTFFSRMNS…AITISFTCNP (103 aa)) constitute a Fe2OG dioxygenase domain. Residues histidine 228 and aspartate 230 each contribute to the Fe cation site. The N-linked (GlcNAc...) asparagine glycan is linked to asparagine 265. Histidine 286 serves as a coordination point for Fe cation. The active site involves arginine 296. 2-oxoglutarate is bound at residue arginine 296.

The protein belongs to the OGFOD3 family. The cofactor is Fe(2+). It depends on L-ascorbate as a cofactor.

It localises to the membrane. In Xenopus tropicalis (Western clawed frog), this protein is 2-oxoglutarate and iron-dependent oxygenase domain-containing protein 3 (ogfod3).